The sequence spans 858 residues: Elongation factor 2b (858 aa).

Residues 17 to 362 form the tr-type G domain; it reads SNIRNMSVIA…MITIHLPSPV (346 aa). GTP-binding positions include 26-33, 158-161, and 216-218; these read AHVDHGKS, NKMD, and SGL. His715 carries the post-translational modification Diphthamide.

The protein belongs to the TRAFAC class translation factor GTPase superfamily. Classic translation factor GTPase family. EF-G/EF-2 subfamily. Binds to 80S ribosomes. Actively translating ribosomes show mutually exclusive binding of eIF5a (EIF5A or EIF5A2) and EEF2/eEF2. Interacts with serbp1; interaction sequesters eef2/eEF2 at the A-site of the ribosome, thereby blocking the interaction sites of the mRNA-tRNA complex, promoting ribosome stabilization and hibernation. Interacts with habp4; interaction takes place at the A-site of hibernating ribosomes and promotes ribosome stabilization.

The protein resides in the cytoplasm. It localises to the nucleus. The catalysed reaction is GTP + H2O = GDP + phosphate + H(+). Its function is as follows. Catalyzes the GTP-dependent ribosomal translocation step during translation elongation. During this step, the ribosome changes from the pre-translocational (PRE) to the post-translocational (POST) state as the newly formed A-site-bound peptidyl-tRNA and P-site-bound deacylated tRNA move to the P and E sites, respectively. Catalyzes the coordinated movement of the two tRNA molecules, the mRNA and conformational changes in the ribosome. The protein is Elongation factor 2b of Danio rerio (Zebrafish).